The chain runs to 273 residues: Dermonecrotic toxin LhSicTox-alphaIA2bi (273 aa).

Residues glutamate 25 and aspartate 27 each contribute to the Mg(2+) site. The active-site Nucleophile is histidine 41. 2 disulfide bridges follow: cysteine 45-cysteine 51 and cysteine 47-cysteine 190. Aspartate 85 lines the Mg(2+) pocket.

This sequence belongs to the arthropod phospholipase D family. Class II subfamily. Requires Mg(2+) as cofactor. In terms of tissue distribution, expressed by the venom gland.

Its subcellular location is the secreted. The catalysed reaction is an N-(acyl)-sphingosylphosphocholine = an N-(acyl)-sphingosyl-1,3-cyclic phosphate + choline. The enzyme catalyses an N-(acyl)-sphingosylphosphoethanolamine = an N-(acyl)-sphingosyl-1,3-cyclic phosphate + ethanolamine. It carries out the reaction a 1-acyl-sn-glycero-3-phosphocholine = a 1-acyl-sn-glycero-2,3-cyclic phosphate + choline. It catalyses the reaction a 1-acyl-sn-glycero-3-phosphoethanolamine = a 1-acyl-sn-glycero-2,3-cyclic phosphate + ethanolamine. Dermonecrotic toxins cleave the phosphodiester linkage between the phosphate and headgroup of certain phospholipids (sphingolipid and lysolipid substrates), forming an alcohol (often choline) and a cyclic phosphate. This toxin acts on sphingomyelin (SM). It may also act on ceramide phosphoethanolamine (CPE), lysophosphatidylcholine (LPC) and lysophosphatidylethanolamine (LPE), but not on lysophosphatidylserine (LPS), and lysophosphatidylglycerol (LPG). It acts by transphosphatidylation, releasing exclusively cyclic phosphate products as second products. Induces dermonecrosis, hemolysis, increased vascular permeability, edema, inflammatory response, and platelet aggregation. This is Dermonecrotic toxin LhSicTox-alphaIA2bi from Loxosceles hirsuta (Recluse spider).